The following is a 273-amino-acid chain: MAAVKCKPTSPGRRHVVKVVNPELHKGKPFAPLLEKNSKSGGRNNNGRITTRHIGGGHKQAYRIVDFKRNKDGIPAVVERLEYDPNRSANIALVLYKDGERRYILAPKGLKAGDQIQSGVDAAIKPGNTLPMRNIPVGSTVHNVEMKPGKGGQLARSAGTYVQIVARDGAYVTLRLRSGEMRKVEADCRATLGEVGNAEHMLRVLGKAGAARWRGVRPTVRGTAMNPVDHPHGGGEGRNFGKHPVTPWGVQTKGKKTRSNKRTDKFIVRRRSK.

Disordered stretches follow at residues 28–53 and 221–273; these read KPFA…TTRH and RGTA…RRSK. Residues 39–48 are compositionally biased toward low complexity; sequence KSGGRNNNGR. The residue at position 242 (Lys242) is an N6-acetyllysine.

It belongs to the universal ribosomal protein uL2 family. In terms of assembly, part of the 50S ribosomal subunit. Forms a bridge to the 30S subunit in the 70S ribosome.

Its function is as follows. One of the primary rRNA binding proteins. Required for association of the 30S and 50S subunits to form the 70S ribosome, for tRNA binding and peptide bond formation. It has been suggested to have peptidyltransferase activity; this is somewhat controversial. Makes several contacts with the 16S rRNA in the 70S ribosome. This chain is Large ribosomal subunit protein uL2, found in Shigella dysenteriae serotype 1 (strain Sd197).